We begin with the raw amino-acid sequence, 611 residues long: POU domain, class 6, transcription factor 1 (611 aa).

The tract at residues 62–93 (ASQAAGEAGPDNLGSSAEATVKSPPGIPPSPA) is disordered. Positions 449-523 (EDGINLEEIR…VLEKWLNEAE (75 aa)) constitute a POU-specific domain. The homeobox DNA-binding region spans 544–603 (KRKRRTSFTPQAIEALNAYFEKNPLPTGQEITEIAKELNYDREVVRVWFCNRRQTLKNTS).

The protein belongs to the POU transcription factor family. Class-6 subfamily. As to expression, in the embryo, expressed exclusively in the developing brain, whereas in the adult its expression is restricted to brain, heart, skeletal muscle and lung. In the brain, the highest expression levels are found in specific cell layers of the cortex, the olfactory bulb, the hippocampus and the cerebellum.

The protein localises to the nucleus. Its function is as follows. Transcription factor that binds preferentially to a variant of the octamer motif (5'-ATGATAAT-3'). The protein is POU domain, class 6, transcription factor 1 (POU6F1) of Homo sapiens (Human).